The following is a 20-amino-acid chain: Cytochrome c oxidase subunit 7B-heart, mitochondrial (20 aa).

This sequence belongs to the cytochrome c oxidase VIIb family. In terms of assembly, component of the cytochrome c oxidase (complex IV, CIV), a multisubunit enzyme composed of 14 subunits. The complex is composed of a catalytic core of 3 subunits MT-CO1, MT-CO2 and MT-CO3, encoded in the mitochondrial DNA, and 11 supernumerary subunits COX4I, COX5A, COX5B, COX6A, COX6B, COX6C, COX7A, COX7B, COX7C, COX8 and NDUFA4, which are encoded in the nuclear genome. The complex exists as a monomer or a dimer and forms supercomplexes (SCs) in the inner mitochondrial membrane with NADH-ubiquinone oxidoreductase (complex I, CI) and ubiquinol-cytochrome c oxidoreductase (cytochrome b-c1 complex, complex III, CIII), resulting in different assemblies (supercomplex SCI(1)III(2)IV(1) and megacomplex MCI(2)III(2)IV(2)).

The protein localises to the mitochondrion inner membrane. The enzyme catalyses 4 Fe(II)-[cytochrome c] + O2 + 8 H(+)(in) = 4 Fe(III)-[cytochrome c] + 2 H2O + 4 H(+)(out). It functions in the pathway energy metabolism; oxidative phosphorylation. In terms of biological role, component of the cytochrome c oxidase, the last enzyme in the mitochondrial electron transport chain which drives oxidative phosphorylation. The respiratory chain contains 3 multisubunit complexes succinate dehydrogenase (complex II, CII), ubiquinol-cytochrome c oxidoreductase (cytochrome b-c1 complex, complex III, CIII) and cytochrome c oxidase (complex IV, CIV), that cooperate to transfer electrons derived from NADH and succinate to molecular oxygen, creating an electrochemical gradient over the inner membrane that drives transmembrane transport and the ATP synthase. Cytochrome c oxidase is the component of the respiratory chain that catalyzes the reduction of oxygen to water. Electrons originating from reduced cytochrome c in the intermembrane space (IMS) are transferred via the dinuclear copper A center (CU(A)) of subunit 2 and heme A of subunit 1 to the active site in subunit 1, a binuclear center (BNC) formed by heme A3 and copper B (CU(B)). The BNC reduces molecular oxygen to 2 water molecules using 4 electrons from cytochrome c in the IMS and 4 protons from the mitochondrial matrix. The chain is Cytochrome c oxidase subunit 7B-heart, mitochondrial from Thunnus obesus (Bigeye tuna).